The sequence spans 208 residues: A-type ATP synthase subunit E (208 aa).

The protein belongs to the V-ATPase E subunit family. Has multiple subunits with at least A(3), B(3), C, D, E, F, H, I and proteolipid K(x).

It localises to the cell membrane. Its function is as follows. Component of the A-type ATP synthase that produces ATP from ADP in the presence of a proton gradient across the membrane. This chain is A-type ATP synthase subunit E, found in Ignicoccus hospitalis (strain KIN4/I / DSM 18386 / JCM 14125).